The sequence spans 390 residues: Homeobox protein Meis1 (390 aa).

One can recognise an MEIS N-terminal domain in the interval 108–192; sequence GGDVCSSESF…IDLVIDDREG (85 aa). Over residues 190-202 the composition is skewed to basic and acidic residues; it reads REGGSKSDSEDVT. The segment at 190 to 279 is disordered; sequence REGGSKSDSE…KKRHKKRGIF (90 aa). Residues 203–213 are compositionally biased toward polar residues; the sequence is RSANLTDQPSW. A DNA-binding region (homeobox; TALE-type) is located at residues 272-334; it reads RHKKRGIFPK…NARRRIVQPM (63 aa). Positions 299 to 329 are interaction with DNA; that stretch reads YPSEEQKKQLAQDTGLTILQVNNWFINARRR. Positions 335 to 390 are required for transcriptional activation; sequence IDQSNRAVSQGTPYNPDGQPMGGFVMDGQQHMGIRAPGPMSGMGMNMGMEGQWHYM.

Belongs to the TALE/MEIS homeobox family. As to quaternary structure, interacts with the N-terminal region of PBX1 to form a heterodimer which binds DNA including a cAMP-responsive sequence in CYP17. Also forms heterodimers with PBX2. Forms heterotrimers with PBX1 or PBX2 and a number of HOX proteins including HOXA9, HOXD4 and HOXD9 where it acts as a non-DNA-binding partner. Also forms heterotrimers with PBX1 and HOX proteins including HOXD9 and HOXD10 where PBX1 is the non-DNA-binding partner. Heterodimer with DLX3. Heterodimer with HOXB13. As to expression, expressed at high levels in the lung with lower levels detected in the heart and brain. Expressed in pancreatic islets (beta-cells and non-beta-cells).

The protein localises to the nucleus. In terms of biological role, acts as a transcriptional regulator of PAX6. Also acts as a transcriptional activator of PF4 in complex with PBX1 or PBX2. Required for hematopoiesis, megakaryocyte lineage development and vascular patterning. May function as a cofactor for HOXA7 and HOXA9 in the induction of myeloid leukemias. This Mus musculus (Mouse) protein is Homeobox protein Meis1 (Meis1).